A 320-amino-acid chain; its full sequence is Aspartate carbamoyltransferase catalytic subunit (320 aa).

Carbamoyl phosphate-binding residues include R70 and T71. Residue K98 coordinates L-aspartate. Carbamoyl phosphate-binding residues include R120, H149, and Q152. L-aspartate is bound by residues R182 and R237. G278 and P279 together coordinate carbamoyl phosphate.

This sequence belongs to the aspartate/ornithine carbamoyltransferase superfamily. ATCase family. Heterododecamer (2C3:3R2) of six catalytic PyrB chains organized as two trimers (C3), and six regulatory PyrI chains organized as three dimers (R2).

The catalysed reaction is carbamoyl phosphate + L-aspartate = N-carbamoyl-L-aspartate + phosphate + H(+). The protein operates within pyrimidine metabolism; UMP biosynthesis via de novo pathway; (S)-dihydroorotate from bicarbonate: step 2/3. Catalyzes the condensation of carbamoyl phosphate and aspartate to form carbamoyl aspartate and inorganic phosphate, the committed step in the de novo pyrimidine nucleotide biosynthesis pathway. The protein is Aspartate carbamoyltransferase catalytic subunit of Vesicomyosocius okutanii subsp. Calyptogena okutanii (strain HA).